Reading from the N-terminus, the 447-residue chain is Phosphoglucosamine mutase (447 aa).

The active-site Phosphoserine intermediate is S103. S103, D242, D244, and D246 together coordinate Mg(2+). S103 bears the Phosphoserine mark.

It belongs to the phosphohexose mutase family. It depends on Mg(2+) as a cofactor. Activated by phosphorylation.

The catalysed reaction is alpha-D-glucosamine 1-phosphate = D-glucosamine 6-phosphate. Functionally, catalyzes the conversion of glucosamine-6-phosphate to glucosamine-1-phosphate. The protein is Phosphoglucosamine mutase of Cereibacter sphaeroides (strain ATCC 17029 / ATH 2.4.9) (Rhodobacter sphaeroides).